A 709-amino-acid polypeptide reads, in one-letter code: Polyribonucleotide nucleotidyltransferase (709 aa).

2 residues coordinate Mg(2+): Asp-486 and Asp-492. The KH domain maps to 553–612 (PRIHTIKINPDKIKDVIGKGGSVIRALTEETGTTIEIEDDGTVKIAATDGEKAKHAISRI). An S1 motif domain is found at 622–690 (GRIYAGKVTR…RQGRVRLSIK (69 aa)).

It belongs to the polyribonucleotide nucleotidyltransferase family. Component of the RNA degradosome, which is a multiprotein complex involved in RNA processing and mRNA degradation. It depends on Mg(2+) as a cofactor.

It is found in the cytoplasm. The enzyme catalyses RNA(n+1) + phosphate = RNA(n) + a ribonucleoside 5'-diphosphate. Its function is as follows. Involved in mRNA degradation. Catalyzes the phosphorolysis of single-stranded polyribonucleotides processively in the 3'- to 5'-direction. The sequence is that of Polyribonucleotide nucleotidyltransferase from Photorhabdus luminescens (Xenorhabdus luminescens).